Consider the following 2061-residue polypeptide: Myoferlin (2061 aa).

The 101-residue stretch at Met1–Tyr101 folds into the C2 1 domain. Residues Met1–Lys2025 lie on the Cytoplasmic side of the membrane. A disordered region spans residues Gly123–Thr172. The span at Asp146–Arg156 shows a compositional bias: acidic residues. Residue Ser174 is modified to Phosphoserine. 2 C2 domains span residues Arg181–Leu300 and Asp339–Phe474. The tract at residues Lys186–Lys281 is necessary for interaction with EHD2. Residues Leu323–Asp342 form a disordered region. Ca(2+)-binding residues include Asp390, Asp396, Asp444, Asp446, and Asp452. At Lys553 the chain carries N6-acetyllysine. The residue at position 729 (Ser729) is a Phosphoserine. Lys884 carries the N6-acetyllysine modification. The interval Glu938–Leu967 is disordered. C2 domains lie at Gly1123 to His1251 and Leu1282 to Asp1410. Ca(2+) is bound by residues Asp1155, Asp1161, Asp1217, and Asp1219. Lys1507 carries the post-translational modification N6-acetyllysine. C2 domains are found at residues Pro1536–Gly1654 and Gly1772–Arg1920. The Ca(2+) site is built by Asp1569, Asp1575, Asp1624, Asp1626, Asp1891, Ser1894, and Asp1897. Ser1915 carries the post-translational modification Phosphoserine. Residues Trp2026–Tyr2046 form a helical membrane-spanning segment. Over Ser2047–Val2061 the chain is Extracellular.

The protein belongs to the ferlin family. Interacts with DNM2 and KDR. Interacts with EHD1. Interacts with EHD2; the interaction is direct. Interacts with RIPOR2. The cofactor is Ca(2+). As to expression, expressed in myoblast and endothelial cells (at protein level). Highly expressed in cardiac and skeletal muscles. Also present in lung, and at very low levels in kidney, placenta and brain.

It is found in the cell membrane. The protein localises to the nucleus membrane. It localises to the cytoplasmic vesicle membrane. Its function is as follows. Calcium/phospholipid-binding protein that plays a role in the plasmalemma repair mechanism of endothelial cells that permits rapid resealing of membranes disrupted by mechanical stress. Involved in endocytic recycling. Implicated in VEGF signal transduction by regulating the levels of the receptor KDR. The protein is Myoferlin (MYOF) of Homo sapiens (Human).